A 78-amino-acid polypeptide reads, in one-letter code: MYPHHSYLRGIPGPAGYPARSPFLFGAPLVGGLLGGFLGSALFNYSRPYAYPPGPYGYGGGPYGFGAGVPYGGYPGFY.

Residues 21-43 (SPFLFGAPLVGGLLGGFLGSALF) form a helical membrane-spanning segment.

The protein localises to the membrane. This is an uncharacterized protein from Bacillus subtilis (strain 168).